A 359-amino-acid polypeptide reads, in one-letter code: Thymidine kinase (359 aa).

ATP is bound at residue 17-24 (GAHGLGKT). E45 acts as the Proton acceptor in catalysis. Residue Q99 coordinates substrate. Residue R187 participates in ATP binding. R193 provides a ligand contact to substrate.

Belongs to the herpesviridae thymidine kinase family. As to quaternary structure, homodimer.

The catalysed reaction is thymidine + ATP = dTMP + ADP + H(+). In terms of biological role, catalyzes the transfer of the gamma-phospho group of ATP to thymidine to generate dTMP in the salvage pathway of pyrimidine synthesis. The dTMP serves as a substrate for DNA polymerase during viral DNA replication. Allows the virus to be reactivated and to grow in non-proliferative cells lacking a high concentration of phosphorylated nucleic acid precursors. The sequence is that of Thymidine kinase from Bos taurus (Bovine).